The chain runs to 395 residues: Tryptophan--tRNA ligase, cytoplasmic (395 aa).

The 'HIGH' region signature appears at 91–100 (PSSDSMHLGH). The short motif at 275 to 279 (KMSAS) is the 'KMSKS' region element. Thr288 and Thr290 each carry phosphothreonine.

This sequence belongs to the class-I aminoacyl-tRNA synthetase family.

It is found in the cytoplasm. The enzyme catalyses tRNA(Trp) + L-tryptophan + ATP = L-tryptophyl-tRNA(Trp) + AMP + diphosphate + H(+). This Schizosaccharomyces pombe (strain 972 / ATCC 24843) (Fission yeast) protein is Tryptophan--tRNA ligase, cytoplasmic (wrs1).